The following is a 653-amino-acid chain: Choline transporter-like protein 3 (653 aa).

The chain crosses the membrane as a helical span at residues 34–54 (WLFLFFLFWTGLVFIMGYSVV). Asparagine 136 and asparagine 151 each carry an N-linked (GlcNAc...) asparagine glycan. The next 5 membrane-spanning stretches (helical) occupy residues 213–233 (DTIL…MFTF), 243–263 (IFIS…WWLY), 284–304 (VLGF…LIFV), 334–354 (LWTF…LLSL), and 384–404 (LIGL…TIAG). 3 N-linked (GlcNAc...) asparagine glycosylation sites follow: asparagine 412, asparagine 503, and asparagine 521. Transmembrane regions (helical) follow at residues 534-554 (FIIF…GLMA) and 563-583 (VWAV…HSFL). Residues 632–653 (RAQQDKHSLRNEEGTELQAIVR) form a disordered region. Positions 634–644 (QQDKHSLRNEE) are enriched in basic and acidic residues.

Belongs to the CTL (choline transporter-like) family.

The protein resides in the membrane. The sequence is that of Choline transporter-like protein 3 (SLC44A3) from Homo sapiens (Human).